The chain runs to 503 residues: Maturase K (503 aa).

Belongs to the intron maturase 2 family. MatK subfamily.

It localises to the plastid. The protein resides in the chloroplast. Its function is as follows. Usually encoded in the trnK tRNA gene intron. Probably assists in splicing its own and other chloroplast group II introns. The chain is Maturase K from Callistemon polandii (Gold-tipped bottlebrush).